The following is a 301-amino-acid chain: Protein p34 (301 aa).

The next 5 membrane-spanning stretches (helical) occupy residues 15-35, 40-60, 83-103, 120-140, and 171-191; these read YLSV…WVVT, ILAA…NLIA, TIFS…FSSV, TVMY…TYVI, and LSDY…LYIF.

It belongs to the cation diffusion facilitator (CDF) transporter (TC 2.A.4) family.

The protein resides in the cell membrane. This Rickettsia rickettsii (strain Sheila Smith) protein is Protein p34 (p34).